The primary structure comprises 279 residues: Apolipoprotein L domain-containing protein 1 (279 aa).

The next 3 helical transmembrane spans lie at 83–105, 122–142, and 192–212; these read SLVANVAGSSLSATGALAAIVGL, GLGVATAGGAVTITSDLSLIF, and IALYNSVYFIVFFGSRGFLIP. The stretch at 226–253 forms a coiled coil; that stretch reads LKAKIQKLAESLESCTGALDELSEQLES.

The protein belongs to the apolipoprotein L family. As to expression, expressed in neonatal dermal microvascular endothelial cells.

It localises to the cell membrane. Its subcellular location is the cell junction. The protein resides in the cytoplasmic vesicle. The protein localises to the secretory vesicle. In terms of biological role, is a modulator of endothelial barrier permeability, required for proper organization of endothelial cell-cell junctions and cytoskeleton. It also plays a role in the modulation of secretory autophagy. May affect blood-brain barrier permeability. This chain is Apolipoprotein L domain-containing protein 1 (APOLD1), found in Homo sapiens (Human).